The sequence spans 495 residues: Trimethylamine methyltransferase MttB1 (495 aa).

Pyl-334 is a non-standard amino acid (pyrrolysine).

It belongs to the trimethylamine methyltransferase family. Can form a complex with MttC.

The enzyme catalyses Co(I)-[trimethylamine-specific corrinoid protein] + trimethylamine + H(+) = methyl-Co(III)-[trimethylamine-specific corrinoid protein] + dimethylamine. It participates in one-carbon metabolism; methanogenesis from trimethylamine. Catalyzes the transfer of a methyl group from trimethylamine to the corrinoid cofactor of MttC. The polypeptide is Trimethylamine methyltransferase MttB1 (mttB1) (Methanosarcina mazei (strain ATCC BAA-159 / DSM 3647 / Goe1 / Go1 / JCM 11833 / OCM 88) (Methanosarcina frisia)).